The sequence spans 201 residues: 3-isopropylmalate dehydratase small subunit (201 aa).

The protein belongs to the LeuD family. LeuD type 1 subfamily. Heterodimer of LeuC and LeuD.

It catalyses the reaction (2R,3S)-3-isopropylmalate = (2S)-2-isopropylmalate. It functions in the pathway amino-acid biosynthesis; L-leucine biosynthesis; L-leucine from 3-methyl-2-oxobutanoate: step 2/4. Catalyzes the isomerization between 2-isopropylmalate and 3-isopropylmalate, via the formation of 2-isopropylmaleate. This is 3-isopropylmalate dehydratase small subunit from Parvibaculum lavamentivorans (strain DS-1 / DSM 13023 / NCIMB 13966).